A 151-amino-acid polypeptide reads, in one-letter code: MKNKLLFMMLTILGAPGIATATNYDLARSEYNFAVNELSKSSFNQAAIIGQVGTDNSARVRQEGSKLLSVISQEGGNNRAKVDQAGNYNFAYIEQTGNANDASISQSAYGNSAAIIQKGSGNKANITQYGTQKTAVVVQKQSHMAIRVTQR.

Positions 1–21 (MKNKLLFMMLTILGAPGIATA) are cleaved as a signal peptide.

It belongs to the CsgA/CsgB family.

The protein localises to the fimbrium. Curlin is the structural subunit of the curli. Curli are coiled surface structures that assemble preferentially at growth temperatures below 37 degrees Celsius. Curli can bind to fibronectin. The minor subunit is the nucleation component of curlin monomers. This is Minor curlin subunit (csgB) from Salmonella enteritidis.